A 661-amino-acid polypeptide reads, in one-letter code: uncharacterized protein (661 aa).

The next 7 membrane-spanning stretches (helical) occupy residues 37 to 57, 87 to 107, 120 to 140, 158 to 178, 243 to 263, 266 to 286, and 341 to 361; these read VFLG…LFLS, INSP…AVFI, WLLL…NVIL, VFWQ…PIIV, LLDI…LYTI, TLMW…IAIG, and FNLL…YNYF. The ABC transmembrane type-1 domain maps to 123-410; that stretch reads LGVLLSLLFV…VTNQIQNITE (288 aa). Residues 453–659 enclose the ABC transporter domain; it reads VALENVTLSP…AEGRWQISPI (207 aa). 487–494 lines the ATP pocket; sequence GPSGSGKS.

The protein belongs to the ABC transporter superfamily.

It localises to the cell inner membrane. This is an uncharacterized protein from Synechocystis sp. (strain ATCC 27184 / PCC 6803 / Kazusa).